The chain runs to 346 residues: 4-hydroxy-2-oxohexanoate aldolase (346 aa).

Positions 7 to 259 (VRITDTSLRD…KTGIDFFDIA (253 aa)) constitute a Pyruvate carboxyltransferase domain. Residue 15–16 (RD) participates in substrate binding. Residue Asp-16 participates in Mn(2+) binding. The Proton acceptor role is filled by His-19. Residues Ser-169 and His-198 each coordinate substrate. The Mn(2+) site is built by His-198 and His-200. Tyr-289 contacts substrate.

This sequence belongs to the 4-hydroxy-2-oxovalerate aldolase family. Homodimer. Forms a heterotetramer composed of two aldolase (HsaF) and two dehydrogenase (HsaG) subunits. It depends on Mn(2+) as a cofactor.

The catalysed reaction is (S)-4-hydroxy-2-oxohexanoate = propanal + pyruvate. It carries out the reaction (S)-4-hydroxy-2-oxopentanoate = acetaldehyde + pyruvate. In terms of biological role, involved in cholesterol degradation. Catalyzes the retro-aldol cleavage of 4-hydroxy-2-oxohexanoate (HOHA) to pyruvate and propanal. Can also catalyze the cleavage of 4-hydroxy-2-oxopentanoate (HOPA) to pyruvate and acetaldehyde. The aldehydes produced by this reaction are directly channeled to the dehydrogenase HsaG. This chain is 4-hydroxy-2-oxohexanoate aldolase, found in Mycobacterium bovis (strain ATCC BAA-935 / AF2122/97).